We begin with the raw amino-acid sequence, 55 residues long: ATP synthase F(0) complex subunit 8 (55 aa).

The helical transmembrane segment at leucine 4–leucine 24 threads the bilayer.

It belongs to the ATPase protein 8 family. In terms of assembly, component of the ATP synthase complex composed at least of ATP5F1A/subunit alpha, ATP5F1B/subunit beta, ATP5MC1/subunit c (homooctomer), MT-ATP6/subunit a, MT-ATP8/subunit 8, ATP5ME/subunit e, ATP5MF/subunit f, ATP5MG/subunit g, ATP5MK/subunit k, ATP5MJ/subunit j, ATP5F1C/subunit gamma, ATP5F1D/subunit delta, ATP5F1E/subunit epsilon, ATP5PF/subunit F6, ATP5PB/subunit b, ATP5PD/subunit d, ATP5PO/subunit OSCP. ATP synthase complex consists of a soluble F(1) head domain (subunits alpha(3) and beta(3)) - the catalytic core - and a membrane F(0) domain - the membrane proton channel (subunits c, a, 8, e, f, g, k and j). These two domains are linked by a central stalk (subunits gamma, delta, and epsilon) rotating inside the F1 region and a stationary peripheral stalk (subunits F6, b, d, and OSCP).

It localises to the mitochondrion membrane. Its function is as follows. Subunit 8, of the mitochondrial membrane ATP synthase complex (F(1)F(0) ATP synthase or Complex V) that produces ATP from ADP in the presence of a proton gradient across the membrane which is generated by electron transport complexes of the respiratory chain. ATP synthase complex consist of a soluble F(1) head domain - the catalytic core - and a membrane F(1) domain - the membrane proton channel. These two domains are linked by a central stalk rotating inside the F(1) region and a stationary peripheral stalk. During catalysis, ATP synthesis in the catalytic domain of F(1) is coupled via a rotary mechanism of the central stalk subunits to proton translocation. In vivo, can only synthesize ATP although its ATP hydrolase activity can be activated artificially in vitro. Part of the complex F(0) domain. The protein is ATP synthase F(0) complex subunit 8 of Scyliorhinus canicula (Small-spotted catshark).